The primary structure comprises 434 residues: Methylenetetrahydrofolate--tRNA-(uracil-5-)-methyltransferase TrmFO (434 aa).

9–14 (GAGLAG) contacts FAD.

Belongs to the MnmG family. TrmFO subfamily. Requires FAD as cofactor.

The protein resides in the cytoplasm. It catalyses the reaction uridine(54) in tRNA + (6R)-5,10-methylene-5,6,7,8-tetrahydrofolate + NADH + H(+) = 5-methyluridine(54) in tRNA + (6S)-5,6,7,8-tetrahydrofolate + NAD(+). The enzyme catalyses uridine(54) in tRNA + (6R)-5,10-methylene-5,6,7,8-tetrahydrofolate + NADPH + H(+) = 5-methyluridine(54) in tRNA + (6S)-5,6,7,8-tetrahydrofolate + NADP(+). In terms of biological role, catalyzes the folate-dependent formation of 5-methyl-uridine at position 54 (M-5-U54) in all tRNAs. In Listeria welshimeri serovar 6b (strain ATCC 35897 / DSM 20650 / CCUG 15529 / CIP 8149 / NCTC 11857 / SLCC 5334 / V8), this protein is Methylenetetrahydrofolate--tRNA-(uracil-5-)-methyltransferase TrmFO.